The primary structure comprises 613 residues: RNA polymerase-associated protein RTF1 homolog (613 aa).

Disordered regions lie at residues 1 to 90 (MSSS…DKAR) and 121 to 247 (QQLA…KDKI). Over residues 55-68 (PAKKKTLTKRKRRA) the composition is skewed to basic residues. Over residues 72-81 (SDDDQVDDDL) the composition is skewed to acidic residues. A compositionally biased stretch (basic and acidic residues) spans 167 to 176 (AAFHRPSDIN). The stretch at 175-209 (INRKHKEKNAMDALKNKRKEIEKKNAKNEALSIDA) forms a coiled coil. A compositionally biased stretch (low complexity) spans 215–235 (SGSSSSSSSSESSRSSSSSRE). The segment covering 236-247 (SSPERVSEKDKI) has biased composition (basic and acidic residues). Positions 252–383 (VDGLSELRRA…KKQDIEKAIN (132 aa)) constitute a Plus3 domain. Positions 425 to 462 (RGDIREAEQIQTKIDEIERQADELEKERSKSISAIAFI) form a coiled coil. Disordered stretches follow at residues 485-549 (SQDD…KTDI) and 564-613 (LKDF…SSAV). A compositionally biased stretch (low complexity) spans 510–521 (TLSASSSTTNLS). The segment covering 569 to 586 (TPESSGNKRPSISSSKGV) has biased composition (polar residues). Positions 602–613 (GSSTSAAPSSAV) are enriched in low complexity.

As to quaternary structure, component of the PAF1 complex which consists of at least cdc-73, ctr-9, leo-1, pafo-1 and rtfo-1.

It localises to the nucleus. In terms of biological role, component of the PAF1 complex which is a multifunctional complex involved in transcription initiation via genetic interactions with TATA-binding proteins, elongation and transcription-coupled histone modification. The protein is RNA polymerase-associated protein RTF1 homolog of Caenorhabditis elegans.